The following is a 429-amino-acid chain: MQVDELLKPFPIKEFHPFPRALLGPGAHEMIGPEALKLGFKKTLVMTSGLRGSDIVHKITESMKYHGLEVVLYDKVESNPKDYNVMDAVKLYQENKCDSFVSIGGGSSHDACKGARISVAHDGRNVNDFEGFNKSENPRNPPHIAVSTTAGTGSETSWAYVITDTTTDPDNPHKYVAFDDASVATLAIDDPVLYYSCPIDYTAQCGFDVLAHASEPYVSRLNFEPSLGNALRAIKLTAENLRQATWNPSELSGREGMMYAQYIAAQAFNSGGLGIIHSISHAVSAFYDTHHGLNNAIALPRVWAFNMPVAYKRFADMAEAMGVDTHGMTDVQAADALAAAIRLLRDVGIPEKFTDVTQDSYSKNRLGQGPTKFYEQASVIKGDDEDVDRITNHVLGDACTPGNAKECTFETVRPVVDHCMNGDLDDLLS.

This sequence belongs to the iron-containing alcohol dehydrogenase family. Homodecamer. Requires Mg(2+) as cofactor. The cofactor is Zn(2+). NADPH serves as cofactor.

The catalysed reaction is methanol + A = formaldehyde + AH2. With respect to regulation, inhibited by azide and hydrazine. In terms of biological role, catalyzes the oxidation of methanol to yield formaldehyde. While the in vivo electron acceptor is not known, N,N-dimethyl-4-nitrosoaniline (NDMA) can serve this function in vitro and is reduced to 4-(hydroxylamino)-N,N-dimethylaniline. It can also use various other primary alcohols, polyols and formaldehyde. In addition, MNO is able to produce methylformate from methanol plus formaldehyde, and possesses a formaldehyde dismutase and a NADH-dependent formaldehyde reductase activity. The sequence is that of Methanol:N,N-dimethyl-4-nitrosoaniline oxidoreductase (mno) from Amycolatopsis methanolica.